The primary structure comprises 291 residues: MNDALKTYSIGIGWFLLSLVSSSANDVMSKYLGTRLHSFEVAFFRFFFSSIVLLPFVVYYGKNTLKTSRPFVHILRGLLLFFGMTSWTYGLSIAPVTTATVISFSIPLFTLILAVFFLNENIIWQRWVVTIVGFVGLVITLKPHAEDFNPEMLYFVLAAISFAMLDIINKKFVVKESMISMLFYSAIVTAVVSIPAAANYWLTPTLFELALLFILGSSGSLILFLLLKAFSMVDATATAPYRYLELVISAIAAYFIFNEFPDKSTLHGAVIIIPATLFIIYSEKKAMSKKI.

10 helical membrane-spanning segments follow: residues 4–24, 41–61, 74–91, 98–118, 121–141, 148–168, 178–198, 206–226, 237–257, and 260–280; these read ALKT…SSSA, VAFF…VYYG, ILRG…TYGL, TATV…VFFL, NIIW…VITL, FNPE…LDII, MISM…PAAA, LFEL…LFLL, ATAP…YFIF, and FPDK…LFII. 2 EamA domains span residues 21–141 and 160–280; these read SSSA…VITL and ISFA…LFII.

This sequence belongs to the drug/metabolite transporter (DMT) superfamily. 10 TMS drug/metabolite exporter (DME) (TC 2.A.7.3) family.

It localises to the cell inner membrane. Its function is as follows. Transports S-adenosylmethionine. This Rickettsia bellii (strain RML369-C) protein is S-adenosylmethionine uptake transporter (sam).